The following is a 145-amino-acid chain: D-aminoacyl-tRNA deacylase (145 aa).

Positions Gly-137–Pro-138 match the Gly-cisPro motif, important for rejection of L-amino acids motif.

The protein belongs to the DTD family. Homodimer.

The protein localises to the cytoplasm. It catalyses the reaction glycyl-tRNA(Ala) + H2O = tRNA(Ala) + glycine + H(+). It carries out the reaction a D-aminoacyl-tRNA + H2O = a tRNA + a D-alpha-amino acid + H(+). Its function is as follows. An aminoacyl-tRNA editing enzyme that deacylates mischarged D-aminoacyl-tRNAs. Also deacylates mischarged glycyl-tRNA(Ala), protecting cells against glycine mischarging by AlaRS. Acts via tRNA-based rather than protein-based catalysis; rejects L-amino acids rather than detecting D-amino acids in the active site. By recycling D-aminoacyl-tRNA to D-amino acids and free tRNA molecules, this enzyme counteracts the toxicity associated with the formation of D-aminoacyl-tRNA entities in vivo and helps enforce protein L-homochirality. The protein is D-aminoacyl-tRNA deacylase of Pseudomonas putida (strain GB-1).